We begin with the raw amino-acid sequence, 73 residues long: Conotoxin Lt9a (73 aa).

Positions 1–23 (MTLTKSAVLILVLLLAFDNFADV) are cleaved as a signal peptide. Positions 24–40 (QPGLITMGGGRLSNLLS) are excised as a propeptide. Disulfide bonds link Cys48-Cys62, Cys53-Cys64, and Cys59-Cys69.

Belongs to the conotoxin P superfamily. Expressed by the venom duct.

It is found in the secreted. In terms of biological role, probable neurotoxin that inhibits ion channels. The polypeptide is Conotoxin Lt9a (Conus litteratus (Lettered cone)).